Consider the following 301-residue polypeptide: G-protein coupled receptor homolog U51 (301 aa).

Residues 1-15 are Extracellular-facing; that stretch reads MEKETKSLAWPATAE. The chain crosses the membrane as a helical span at residues 16–36; the sequence is FYGWVFIFSSIQLCTMVLLTV. Residues 37–48 are Cytoplasmic-facing; that stretch reads RFNSFKVGREYA. A helical membrane pass occupies residues 49–69; it reads VFTFAGMSFNCFLLPIKMGLL. Residues 70–82 are Extracellular-facing; it reads SGHWSLPRDFCAI. The helical transmembrane segment at 83-103 threads the bilayer; it reads LLYIDDFSIYFSSWSLVFMAI. Residues 104-122 lie on the Cytoplasmic side of the membrane; that stretch reads ERINHFCYSTPLLNENSKA. A helical transmembrane segment spans residues 123–143; it reads LAKVCFPIVWIISGVQALQML. At 144–168 the chain is on the extracellular side; it reads NNYKATALQNETPQCFLAFLRSGYD. The helical transmembrane segment at 169 to 189 threads the bilayer; sequence MWLMLVYSVMIPVMLVFIYIY. Over 190-199 the chain is Cytoplasmic; that stretch reads SKNFMLLKDE. A helical membrane pass occupies residues 200-220; sequence LSTVTTYLCIYLLLGTIAHLP. Residues 221–238 lie on the Extracellular side of the membrane; that stretch reads KAGLSEIESDKIFYGLRD. A helical membrane pass occupies residues 239 to 259; it reads IFMALPVLKVYYIPVMAYCMA. Residues 260-301 lie on the Cytoplasmic side of the membrane; it reads CDDHTVPVRLCSIWLVNLCKKCFSCTRREKESDLEVGIKMLK.

It belongs to the G-protein coupled receptor 1 family.

It is found in the host cell membrane. The sequence is that of G-protein coupled receptor homolog U51 (U51) from Homo sapiens (Human).